A 367-amino-acid chain; its full sequence is 2'-5'-oligoadenylate synthase 1A (367 aa).

Residues 14–61 (DKFIEDYLLPDTTFGADVKSAVNVVCDFLKERCFQGAAHPVRVSKVVK) are interaction with dsRNA. Ser64 lines the ATP pocket. Asp76, Asp78, and Asp149 together coordinate Mg(2+). The tract at residues 201–211 (QRPTKLKSLIR) is interaction with dsRNA. ATP is bound by residues Arg211, Lys214, and Gln231. The S-geranylgeranyl cysteine moiety is linked to residue Cys364.

Belongs to the 2-5A synthase family. In terms of assembly, monomer. Homotetramer. Interacts with OAS1D; the interaction inhibits OAS1A catalytic activity. The cofactor is Mg(2+). Post-translationally, C-terminal prenylated. Expressed in oocytes and granulosa cells of ovary, in intestine, stomach, spleen and uterus (at protein level). Expressed at high levels in the digestive tract and lymphoid organs. Expressed in ovary and spleen.

It is found in the cytoplasm. The protein resides in the mitochondrion. The protein localises to the nucleus. It localises to the microsome. Its subcellular location is the endoplasmic reticulum. The enzyme catalyses 3 ATP = 5'-triphosphoadenylyl-(2'-&gt;5')-adenylyl-(2'-&gt;5')-adenosine + 2 diphosphate. Its activity is regulated as follows. Produced as a latent enzyme which is activated by dsRNA generated during the course of viral infection. The dsRNA activator must be at least 15 nucleotides long, and no modification of the 2'-hydroxyl group is tolerated. ssRNA or dsDNA do not act as activators. In terms of biological role, interferon-induced, dsRNA-activated antiviral enzyme which plays a critical role in cellular innate antiviral response. In addition, it may also play a role in other cellular processes such as apoptosis, cell growth, differentiation and gene regulation. Synthesizes higher oligomers of 2'-5'-oligoadenylates (2-5A) from ATP which then bind to the inactive monomeric form of ribonuclease L (RNase L) leading to its dimerization and subsequent activation. Activation of RNase L leads to degradation of cellular as well as viral RNA, resulting in the inhibition of protein synthesis, thus terminating viral replication. Can mediate the antiviral effect via the classical RNase L-dependent pathway or an alternative antiviral pathway independent of RNase L. In Mus musculus (Mouse), this protein is 2'-5'-oligoadenylate synthase 1A (Oas1a).